A 205-amino-acid polypeptide reads, in one-letter code: Thiamine-phosphate synthase (205 aa).

4-amino-2-methyl-5-(diphosphooxymethyl)pyrimidine-binding positions include 35-39 and Asn67; that span reads QYRDK. 2 residues coordinate Mg(2+): Asp68 and Asp86. Residue Thr105 coordinates 4-amino-2-methyl-5-(diphosphooxymethyl)pyrimidine. 132–134 contacts 2-[(2R,5Z)-2-carboxy-4-methylthiazol-5(2H)-ylidene]ethyl phosphate; sequence SLT. Position 135 (Lys135) interacts with 4-amino-2-methyl-5-(diphosphooxymethyl)pyrimidine. Gly162 lines the 2-[(2R,5Z)-2-carboxy-4-methylthiazol-5(2H)-ylidene]ethyl phosphate pocket.

This sequence belongs to the thiamine-phosphate synthase family. Mg(2+) serves as cofactor.

The enzyme catalyses 2-[(2R,5Z)-2-carboxy-4-methylthiazol-5(2H)-ylidene]ethyl phosphate + 4-amino-2-methyl-5-(diphosphooxymethyl)pyrimidine + 2 H(+) = thiamine phosphate + CO2 + diphosphate. The catalysed reaction is 2-(2-carboxy-4-methylthiazol-5-yl)ethyl phosphate + 4-amino-2-methyl-5-(diphosphooxymethyl)pyrimidine + 2 H(+) = thiamine phosphate + CO2 + diphosphate. It carries out the reaction 4-methyl-5-(2-phosphooxyethyl)-thiazole + 4-amino-2-methyl-5-(diphosphooxymethyl)pyrimidine + H(+) = thiamine phosphate + diphosphate. It participates in cofactor biosynthesis; thiamine diphosphate biosynthesis; thiamine phosphate from 4-amino-2-methyl-5-diphosphomethylpyrimidine and 4-methyl-5-(2-phosphoethyl)-thiazole: step 1/1. Condenses 4-methyl-5-(beta-hydroxyethyl)thiazole monophosphate (THZ-P) and 2-methyl-4-amino-5-hydroxymethyl pyrimidine pyrophosphate (HMP-PP) to form thiamine monophosphate (TMP). The sequence is that of Thiamine-phosphate synthase from Pseudomonas savastanoi pv. phaseolicola (strain 1448A / Race 6) (Pseudomonas syringae pv. phaseolicola (strain 1448A / Race 6)).